Reading from the N-terminus, the 157-residue chain is 2-C-methyl-D-erythritol 2,4-cyclodiphosphate synthase (157 aa).

A divalent metal cation is bound by residues aspartate 9 and histidine 11. 4-CDP-2-C-methyl-D-erythritol 2-phosphate is bound by residues 9–11 and 35–36; these read DVH and HS. Position 43 (histidine 43) interacts with a divalent metal cation. 4-CDP-2-C-methyl-D-erythritol 2-phosphate-binding positions include 57-59, 62-66, 101-107, 133-136, phenylalanine 140, and arginine 143; these read DIG, FPDTD, AEKPKMA, and TTTE.

The protein belongs to the IspF family. In terms of assembly, homotrimer. It depends on a divalent metal cation as a cofactor.

The catalysed reaction is 4-CDP-2-C-methyl-D-erythritol 2-phosphate = 2-C-methyl-D-erythritol 2,4-cyclic diphosphate + CMP. The protein operates within isoprenoid biosynthesis; isopentenyl diphosphate biosynthesis via DXP pathway; isopentenyl diphosphate from 1-deoxy-D-xylulose 5-phosphate: step 4/6. Its function is as follows. Involved in the biosynthesis of isopentenyl diphosphate (IPP) and dimethylallyl diphosphate (DMAPP), two major building blocks of isoprenoid compounds. Catalyzes the conversion of 4-diphosphocytidyl-2-C-methyl-D-erythritol 2-phosphate (CDP-ME2P) to 2-C-methyl-D-erythritol 2,4-cyclodiphosphate (ME-CPP) with a corresponding release of cytidine 5-monophosphate (CMP). The chain is 2-C-methyl-D-erythritol 2,4-cyclodiphosphate synthase from Listeria monocytogenes serotype 4b (strain CLIP80459).